We begin with the raw amino-acid sequence, 262 residues long: Integral membrane protein 2B (262 aa).

The Cytoplasmic segment spans residues 1–49; sequence MVKVSFNSALAHKEAANKEEENSQVLILPPDAKEPEDVVVPAGHKRAWC. The chain crosses the membrane as a helical; Signal-anchor for type II membrane protein span at residues 50–70; that stretch reads WCMCFGLAFMLAGVILGGAYL. At 71–262 the chain is on the lumenal side; that stretch reads YKYFAFQQGG…FAMETLICEQ (192 aa). One can recognise a BRICHOS domain in the interval 132-226; that stretch reads FADSDPADIV…LCRGKETYKL (95 aa). 2 disulfide bridges follow: Cys159-Cys218 and Cys243-Cys260. Asn165 carries N-linked (GlcNAc...) asparagine glycosylation.

It belongs to the ITM2 family. In terms of assembly, homodimer; disulfide-linked. As to expression, expressed in areas of chondro-osteogenic transition and widely in the nervous system.

The protein resides in the golgi apparatus membrane. It localises to the cell membrane. It is found in the endosome membrane. Its function is as follows. Plays a role in the induction of neurite outgrowth. The protein is Integral membrane protein 2B (ITM2B) of Gallus gallus (Chicken).